The primary structure comprises 901 residues: Alanine--tRNA ligase (901 aa).

Residues histidine 581, histidine 585, cysteine 684, and histidine 688 each contribute to the Zn(2+) site.

This sequence belongs to the class-II aminoacyl-tRNA synthetase family. Requires Zn(2+) as cofactor.

The protein localises to the cytoplasm. The catalysed reaction is tRNA(Ala) + L-alanine + ATP = L-alanyl-tRNA(Ala) + AMP + diphosphate. Functionally, catalyzes the attachment of alanine to tRNA(Ala) in a two-step reaction: alanine is first activated by ATP to form Ala-AMP and then transferred to the acceptor end of tRNA(Ala). Also edits incorrectly charged Ser-tRNA(Ala) and Gly-tRNA(Ala) via its editing domain. The sequence is that of Alanine--tRNA ligase from Mycobacterium marinum (strain ATCC BAA-535 / M).